A 395-amino-acid chain; its full sequence is Secreted aspartyl protease 1 (395 aa).

Residues 1–20 (MQLSIQAIIGFVVAAGLAVA) form the signal peptide. Positions 21–88 (SELPSPMTVN…HLLLDLIDKR (68 aa)) are cleaved as a propeptide — removed in mature form. An N-linked (GlcNAc...) asparagine glycan is attached at Asn41. The 287-residue stretch at 105–391 (WAGDVQFGQS…DMGKNRMGFA (287 aa)) folds into the Peptidase A1 domain. Active-site residues include Asp121 and Asp283. Cys321 and Cys352 are joined by a disulfide.

Belongs to the peptidase A1 family.

The protein resides in the secreted. Its activity is regulated as follows. Inhibited by pepstatin A. Its function is as follows. Dominant secreted aspartyl protease that has a clear preference for aromatic residues in the P1' position directly adjacent to the cleavage site and, in particular, Trp. In addition, it generally cleaves peptides containing Lys, Arg, Phe, Tyr, or Nle (norleucine) in the P1 position, Nle and Glu at P2, and Arg and Val at P2'. Has important roles in facilitating the interaction of the yeast with the external environment. Is able to rapidly hydrolyze Staphylococcus aureus protein A, an important S.aureus virulence factor involved in immune evasion and biofilm formation. Shows anti-biofilm properties and thus plays a role in inter-kingdom interactions, beneficial for host skin health. This is Secreted aspartyl protease 1 from Malassezia globosa (strain ATCC MYA-4612 / CBS 7966) (Dandruff-associated fungus).